Consider the following 1192-residue polypeptide: Methionine synthase (1192 aa).

The region spanning 1–312 (MTAADKHLYD…AHIREVAAAV (312 aa)) is the Hcy-binding domain. 3 residues coordinate Zn(2+): C231, C297, and C298. The Pterin-binding domain occupies 343-601 (VLVIGERTNA…RIPEEQRNVA (259 aa)). Positions 635–728 (RLAELAGLPL…HMERSDDDSG (94 aa)) constitute a B12-binding N-terminal domain. The B12-binding domain occupies 729–866 (KGRIVLATVK…SAKRGEAPDE (138 aa)). Methylcob(III)alamin is bound by residues 739-743 (GDVHD), H742, S787, and A845. Residues 860–904 (RGEAPDENSPEAIKAREKEAERKARHQRSKRIAAQRKAAEEPVEV) form a disordered region. The segment covering 872–881 (IKAREKEAER) has biased composition (basic and acidic residues). Residues 882–893 (KARHQRSKRIAA) are compositionally biased toward basic residues. Residues 893 to 1192 (AQRKAAEEPV…HHPEAKYFNV (300 aa)) enclose the AdoMet activation domain. Residues D940, R1135, and 1189-1190 (YF) contribute to the S-adenosyl-L-methionine site.

Belongs to the vitamin-B12 dependent methionine synthase family. Methylcob(III)alamin is required as a cofactor. Requires Zn(2+) as cofactor.

The enzyme catalyses (6S)-5-methyl-5,6,7,8-tetrahydrofolate + L-homocysteine = (6S)-5,6,7,8-tetrahydrofolate + L-methionine. It participates in amino-acid biosynthesis; L-methionine biosynthesis via de novo pathway; L-methionine from L-homocysteine (MetH route): step 1/1. Its function is as follows. Catalyzes the transfer of a methyl group from methyl-cobalamin to homocysteine, yielding enzyme-bound cob(I)alamin and methionine. Subsequently, remethylates the cofactor using methyltetrahydrofolate. The chain is Methionine synthase (metH) from Mycobacterium tuberculosis (strain ATCC 25618 / H37Rv).